A 164-amino-acid chain; its full sequence is Protein-export protein SecB (164 aa).

It belongs to the SecB family. As to quaternary structure, homotetramer, a dimer of dimers. One homotetramer interacts with 1 SecA dimer.

It localises to the cytoplasm. Its function is as follows. One of the proteins required for the normal export of preproteins out of the cell cytoplasm. It is a molecular chaperone that binds to a subset of precursor proteins, maintaining them in a translocation-competent state. It also specifically binds to its receptor SecA. This Herminiimonas arsenicoxydans protein is Protein-export protein SecB.